A 233-amino-acid polypeptide reads, in one-letter code: Hydroxyacylglutathione hydrolase (233 aa).

Zn(2+)-binding residues include His-52, His-54, Asp-56, His-57, His-108, Asp-125, and His-163.

Belongs to the metallo-beta-lactamase superfamily. Glyoxalase II family. In terms of assembly, monomer. Zn(2+) serves as cofactor.

The catalysed reaction is an S-(2-hydroxyacyl)glutathione + H2O = a 2-hydroxy carboxylate + glutathione + H(+). It functions in the pathway secondary metabolite metabolism; methylglyoxal degradation; (R)-lactate from methylglyoxal: step 2/2. Its function is as follows. Thiolesterase that catalyzes the hydrolysis of S-D-lactoyl-glutathione to form glutathione and D-lactic acid. The protein is Hydroxyacylglutathione hydrolase of Actinobacillus succinogenes (strain ATCC 55618 / DSM 22257 / CCUG 43843 / 130Z).